The following is a 333-amino-acid chain: Serine/threonine-protein phosphatase PP1-beta (333 aa).

Positions 63, 65, 91, and 123 each coordinate Mn(2+). The Proton donor role is filled by histidine 124. Mn(2+)-binding residues include histidine 172 and histidine 247. The tract at residues 306–333 (GAGGVGSNRPVTPPRNAPAAQPKKGAKK) is disordered. Residues 322–333 (APAAQPKKGAKK) show a composition bias toward low complexity.

Belongs to the PPP phosphatase family. PP-1 subfamily. As to quaternary structure, interacts with lab-1; the interaction is direct. Interacts with knl-1; the interaction is direct. It depends on Mn(2+) as a cofactor. Expressed in gonads, nervous system, intestine and muscles.

It localises to the cytoplasm. The protein localises to the nucleus. The enzyme catalyses O-phospho-L-seryl-[protein] + H2O = L-seryl-[protein] + phosphate. It catalyses the reaction O-phospho-L-threonyl-[protein] + H2O = L-threonyl-[protein] + phosphate. Inhibited by okadaic acid. Serine/threonine-protein phosphatase essential for chromosomal dynamics during meiosis and mitosis. During meiosis, promotes chromosomal cohesion and germline immortality via a small RNA-mediated genome silencing pathway. Antagonizes the function of air-2 kinase during meiosis I and mitosis to promote chromatid cohesion and spindle attachment. Dephosphorylates histone H3 at 'Ser-10'. Dephosphorylates histone H3 at 'Thr-3'. Also involved in the activation of chloride channel clh-3 during cell swelling and meiotic maturation. Promotes small RNA-mediated genome silencing over multiple generations. Essential for embryogenesis. In Caenorhabditis elegans, this protein is Serine/threonine-protein phosphatase PP1-beta.